A 333-amino-acid polypeptide reads, in one-letter code: uncharacterized protein (333 aa).

Positions 1-16 (MRPFLMILSVTYIASA) are cleaved as a signal peptide. An N-linked (GlcNAc...) asparagine glycan is attached at asparagine 204.

This is an uncharacterized protein from Encephalitozoon cuniculi (strain GB-M1) (Microsporidian parasite).